The primary structure comprises 355 residues: Epoxyqueuosine reductase (355 aa).

The active-site Proton donor is the aspartate 143. In terms of domain architecture, 4Fe-4S ferredoxin-type spans 185-217 (LPLPIDTPATAHCGTCTRCIDICPTQAIIAPHR). Residues cysteine 197, cysteine 200, cysteine 203, cysteine 207, cysteine 223, cysteine 250, cysteine 253, and cysteine 257 each contribute to the [4Fe-4S] cluster site.

The protein belongs to the QueG family. In terms of assembly, monomer. The cofactor is cob(II)alamin. [4Fe-4S] cluster serves as cofactor.

It localises to the cytoplasm. The catalysed reaction is epoxyqueuosine(34) in tRNA + AH2 = queuosine(34) in tRNA + A + H2O. Its pathway is tRNA modification; tRNA-queuosine biosynthesis. In terms of biological role, catalyzes the conversion of epoxyqueuosine (oQ) to queuosine (Q), which is a hypermodified base found in the wobble positions of tRNA(Asp), tRNA(Asn), tRNA(His) and tRNA(Tyr). This chain is Epoxyqueuosine reductase, found in Xanthomonas campestris pv. campestris (strain ATCC 33913 / DSM 3586 / NCPPB 528 / LMG 568 / P 25).